A 439-amino-acid chain; its full sequence is Xylose isomerase (439 aa).

Catalysis depends on residues His99 and Asp102. Mg(2+)-binding residues include Glu230, Glu266, His269, Asp294, Asp305, Asp307, and Asp337.

The protein belongs to the xylose isomerase family. As to quaternary structure, homotetramer. Mg(2+) serves as cofactor.

The protein localises to the cytoplasm. The catalysed reaction is alpha-D-xylose = alpha-D-xylulofuranose. The polypeptide is Xylose isomerase (Shouchella clausii (strain KSM-K16) (Alkalihalobacillus clausii)).